The following is a 571-amino-acid chain: Mannan endo-1,4-beta-mannosidase B (571 aa).

Positions Met1 to Ala19 are cleaved as a signal peptide. The CBM6 domain occupies Val22–Asn141. Residues Pro165 to Asp459 form the GH26 domain. Trp286 is a binding site for substrate. The active-site Proton donor is Glu319. Substrate-binding residues include Trp324 and Tyr379. Glu407 (nucleophile) is an active-site residue. 2 CBM10 domains span residues Glu491–Gly527 and Val534–Ile571.

Belongs to the glycosyl hydrolase 26 family.

The catalysed reaction is Random hydrolysis of (1-&gt;4)-beta-D-mannosidic linkages in mannans, galactomannans and glucomannans.. This chain is Mannan endo-1,4-beta-mannosidase B (MANB), found in Piromyces sp.